Consider the following 420-residue polypeptide: Annetocin receptor (420 aa).

Over 1-54 (MEMDDDEAILLDDIYALASTPNQTIVTSSFPQTVSPGFLARRNEALAMVEVAVQ) the chain is Extracellular. Asparagine 22 is a glycosylation site (N-linked (GlcNAc...) asparagine). A helical transmembrane segment spans residues 55-75 (STILILTVVGNAAVLAMIVSL). Residues 76-83 (SRHKDLGR) are Cytoplasmic-facing. Residues 84 to 104 (MYTMIGHLSCADLFVAIFNLL) traverse the membrane as a helical segment. Residues 105 to 124 (PQLLWDVTHRFRGGRVLCKL) lie on the Extracellular side of the membrane. Residues cysteine 122 and cysteine 201 are joined by a disulfide bond. The chain crosses the membrane as a helical span at residues 125 to 145 (VKYVQVVAMYASAYVLMSTAV). The Cytoplasmic segment spans residues 146–166 (DRYTAICHPMRSHTWTSTTAH). The chain crosses the membrane as a helical span at residues 167-187 (YLVIGAWVLALVFAVPQLVIF). The Extracellular segment spans residues 188–212 (DYVEVVPGSGVYDCVDHFRPRWTLP). The chain crosses the membrane as a helical span at residues 213-233 (VYITWFALAVYVIPLVVLATI). Residues 234–328 (YLRICVVVWK…KTKTVKLTLT (95 aa)) lie on the Cytoplasmic side of the membrane. A helical transmembrane segment spans residues 329–349 (VVISYLVCWAPFFVSHIWSAW). Residues 350–360 (DPHAPFEGTEM) lie on the Extracellular side of the membrane. A helical membrane pass occupies residues 361-381 (VITLLLGSLNSCINPWIYLAF). Over 382-420 (SDQLRRKVTQCCPRSWGQRPSTLSHDSTDFRSGSRPTHS) the chain is Cytoplasmic. The interval 397-420 (WGQRPSTLSHDSTDFRSGSRPTHS) is disordered. Residues 399–420 (QRPSTLSHDSTDFRSGSRPTHS) show a composition bias toward polar residues.

This sequence belongs to the G-protein coupled receptor 1 family. Vasopressin/oxytocin receptor subfamily. Nephridia in clitellum region.

It localises to the cell membrane. Its function is as follows. Receptor for annetocin. Activation by annetocin may induce egg-laying behavior through calcium-dependent signaling. The polypeptide is Annetocin receptor (Eisenia fetida (Red wiggler worm)).